We begin with the raw amino-acid sequence, 458 residues long: Putative U-box domain-containing protein 46 (458 aa).

A U-box domain is found at 71-144 (EVPKEFICTL…TQWCLVNKYD (74 aa)). ARM repeat units follow at residues 241–281 (ESNK…SLSA) and 283–322 (DSNKIIIGNSEAVKALIDLIEEGDLLATKEATSTVFNLCI).

The catalysed reaction is S-ubiquitinyl-[E2 ubiquitin-conjugating enzyme]-L-cysteine + [acceptor protein]-L-lysine = [E2 ubiquitin-conjugating enzyme]-L-cysteine + N(6)-ubiquitinyl-[acceptor protein]-L-lysine.. Its pathway is protein modification; protein ubiquitination. Functions as an E3 ubiquitin ligase. The polypeptide is Putative U-box domain-containing protein 46 (PUB46) (Arabidopsis thaliana (Mouse-ear cress)).